A 229-amino-acid polypeptide reads, in one-letter code: NAD-dependent protein deacetylase (229 aa).

One can recognise a Deacetylase sirtuin-type domain in the interval 1–229 (MNKLNEALKK…SDAVKVFEEI (229 aa)). Residues Ala20, Arg32, Gln96, Ile98, Asp99, His114, Thr181, Ser182, Asn205, and Val223 each contribute to the NAD(+) site. Positions 98 and 99 each coordinate nicotinamide. His114 serves as the catalytic Proton acceptor.

This sequence belongs to the sirtuin family. Class U subfamily.

It localises to the cytoplasm. The catalysed reaction is N(6)-acetyl-L-lysyl-[protein] + NAD(+) + H2O = 2''-O-acetyl-ADP-D-ribose + nicotinamide + L-lysyl-[protein]. Its function is as follows. NAD-dependent protein deacetylase which modulates the activities of several enzymes which are inactive in their acetylated form. The protein is NAD-dependent protein deacetylase of Listeria monocytogenes serovar 1/2a (strain ATCC BAA-679 / EGD-e).